The chain runs to 317 residues: Aspartate carbamoyltransferase catalytic subunit (317 aa).

Carbamoyl phosphate contacts are provided by Arg66 and Thr67. L-aspartate is bound at residue Lys94. Carbamoyl phosphate contacts are provided by Arg116, His144, and Gln147. Residues Arg177 and Arg231 each contribute to the L-aspartate site. The carbamoyl phosphate site is built by Gly272 and Pro273.

The protein belongs to the aspartate/ornithine carbamoyltransferase superfamily. ATCase family. As to quaternary structure, heterododecamer (2C3:3R2) of six catalytic PyrB chains organized as two trimers (C3), and six regulatory PyrI chains organized as three dimers (R2).

It catalyses the reaction carbamoyl phosphate + L-aspartate = N-carbamoyl-L-aspartate + phosphate + H(+). It participates in pyrimidine metabolism; UMP biosynthesis via de novo pathway; (S)-dihydroorotate from bicarbonate: step 2/3. Its function is as follows. Catalyzes the condensation of carbamoyl phosphate and aspartate to form carbamoyl aspartate and inorganic phosphate, the committed step in the de novo pyrimidine nucleotide biosynthesis pathway. In Bradyrhizobium sp. (strain BTAi1 / ATCC BAA-1182), this protein is Aspartate carbamoyltransferase catalytic subunit.